Consider the following 201-residue polypeptide: 3-isopropylmalate dehydratase small subunit (201 aa).

This sequence belongs to the LeuD family. LeuD type 1 subfamily. In terms of assembly, heterodimer of LeuC and LeuD.

It carries out the reaction (2R,3S)-3-isopropylmalate = (2S)-2-isopropylmalate. The protein operates within amino-acid biosynthesis; L-leucine biosynthesis; L-leucine from 3-methyl-2-oxobutanoate: step 2/4. Functionally, catalyzes the isomerization between 2-isopropylmalate and 3-isopropylmalate, via the formation of 2-isopropylmaleate. The protein is 3-isopropylmalate dehydratase small subunit of Shewanella denitrificans (strain OS217 / ATCC BAA-1090 / DSM 15013).